The following is a 1904-amino-acid chain: Callose synthase 10 (1904 aa).

The stretch at 100–132 (VIKQKLAKRDGASIDRDRDIERLWEFYKLYKRR) is one HAT 1 repeat. 6 helical membrane passes run 491-511 (SFIRLWIFMFIMFQSLTIIAF), 532-552 (AIMNFIECLLDVVLMYGAYSM), 562-582 (VIRFLWWGLGSAFVVYYYVKV), 594-614 (FFFHLYILVLGCYAAVRLIFG), 661-681 (YVAFWLVVLASKFTFAYFLQI), and 722-742 (VLAIYLMDIHIWYTLLSAIIG). The LRR 1 repeat unit spans residues 678–701 (FLQIKPLVKPTNTIIHLPPFQYSW). LRR repeat units follow at residues 751 to 774 (LGEIRTIEMVHKRFESFPEAFAQN) and 925 to 948 (TLNLKKLQLVVSRFTALTGLLIRN). Residues 1074-1107 (YSSSELRSENEDGISILFYLQKIFPDEWENFLER) form an HAT 2 repeat. An LRR 4 repeat occupies 1159 to 1181 (FLERRGLGVDDASLTNMPRGFES). 9 consecutive transmembrane segments (helical) span residues 1474 to 1494 (FTTVGFYVCTMMTVLTVYVFL), 1529 to 1549 (FLVQIGIFTAVPMVMGFILEL), 1554 to 1574 (AIFSFITMQFQLCSVFFTFSL), 1621 to 1641 (AFEVALLLIIYIAYGYTDGGA), 1644 to 1664 (FVLLTISSWFLVISWLFAPYI), 1747 to 1767 (LALYGYSWVVLVVIVFLFKLF), 1783 to 1803 (FLQGVASITFIALIVVAIAMT), 1811 to 1831 (FACVLGFIPTGWALLSLAITW), and 1853 to 1873 (AAMGMLIFSPIALLSWFPFIS). The HAT 3 repeat unit spans residues 1659-1691 (LFAPYIFNPSGFEWQKTVEDFEDWVSWLMYKGG).

The protein belongs to the glycosyltransferase 48 family.

It localises to the cell membrane. The enzyme catalyses [(1-&gt;3)-beta-D-glucosyl](n) + UDP-alpha-D-glucose = [(1-&gt;3)-beta-D-glucosyl](n+1) + UDP + H(+). Functionally, involved in sporophytic and gametophytic development. Required for normal plant development and for the proper accumulation of callose at cell plates, cll walls and plasmodesmata. During pollen formation, required for the entry of microspores into mitosis. During plant growth and development, callose is found as a transitory component of the cell plate in dividing cells, is a major component of pollen mother cell walls and pollen tubes, and is found as a structural component of plasmodesmatal canals. Required for proper cell division and tissue patterning throughout plant organs, including stomatal patterning. The protein is Callose synthase 10 (CALS10) of Arabidopsis thaliana (Mouse-ear cress).